The chain runs to 264 residues: 2-hydroxyhexa-2,4-dienoate hydratase (264 aa).

The protein belongs to the hydratase/decarboxylase family.

The catalysed reaction is (2Z,4Z)-2-hydroxyhexa-2,4-dienoate + H2O = 4-hydroxy-2-oxohexanoate. Functionally, involved in the catatabolism of testosterone. Catalyzes the hydration of 2-hydroxyhexa-2,4-dienoic acid to 4-hydroxy-2-oxohexanoic acid. The polypeptide is 2-hydroxyhexa-2,4-dienoate hydratase (tesE) (Comamonas testosteroni (Pseudomonas testosteroni)).